We begin with the raw amino-acid sequence, 609 residues long: UvrABC system protein C (609 aa).

The 79-residue stretch at 15 to 93 folds into the GIY-YIG domain; sequence SSAGVYRMYD…IKQYMPKYNV (79 aa). Residues 202 to 237 enclose the UVR domain; it reads QQVVTNLVTKMEQAAEEFHYEQAAAYRDQITALRKV.

It belongs to the UvrC family. As to quaternary structure, interacts with UvrB in an incision complex.

The protein localises to the cytoplasm. The UvrABC repair system catalyzes the recognition and processing of DNA lesions. UvrC both incises the 5' and 3' sides of the lesion. The N-terminal half is responsible for the 3' incision and the C-terminal half is responsible for the 5' incision. The protein is UvrABC system protein C of Shewanella denitrificans (strain OS217 / ATCC BAA-1090 / DSM 15013).